A 569-amino-acid chain; its full sequence is Proline--tRNA ligase (569 aa).

Belongs to the class-II aminoacyl-tRNA synthetase family. ProS type 1 subfamily. In terms of assembly, homodimer.

The protein localises to the cytoplasm. It carries out the reaction tRNA(Pro) + L-proline + ATP = L-prolyl-tRNA(Pro) + AMP + diphosphate. Catalyzes the attachment of proline to tRNA(Pro) in a two-step reaction: proline is first activated by ATP to form Pro-AMP and then transferred to the acceptor end of tRNA(Pro). As ProRS can inadvertently accommodate and process non-cognate amino acids such as alanine and cysteine, to avoid such errors it has two additional distinct editing activities against alanine. One activity is designated as 'pretransfer' editing and involves the tRNA(Pro)-independent hydrolysis of activated Ala-AMP. The other activity is designated 'posttransfer' editing and involves deacylation of mischarged Ala-tRNA(Pro). The misacylated Cys-tRNA(Pro) is not edited by ProRS. The polypeptide is Proline--tRNA ligase (Nitrosospira multiformis (strain ATCC 25196 / NCIMB 11849 / C 71)).